Reading from the N-terminus, the 1262-residue chain is Putative late blight resistance protein homolog R1B-23 (1262 aa).

Coiled-coil stretches lie at residues 364–384 (DSLA…ESMQ) and 475–496 (RMNE…KLLN). Residues 475-761 (RMNEEIVGFE…ISESFIKSCE (287 aa)) enclose the NB-ARC domain. 508 to 515 (GMPGLGKT) serves as a coordination point for ATP. 6 LRR repeats span residues 890 to 914 (FKFL…LFYL), 933 to 961 (LWNL…VWDM), 1036 to 1059 (PIRL…CISA), 1064 to 1083 (YLEL…TADH), 1084 to 1112 (LKHL…MFPQ), and 1133 to 1157 (FPNL…FMDI). The HMA domain maps to 1181 to 1248 (ETQVEDNQNT…KLRNVAYADE (68 aa)).

This sequence belongs to the disease resistance NB-LRR family.

The protein localises to the cytoplasm. It is found in the membrane. In terms of biological role, confers resistance to late blight (Phytophthora infestans) races carrying the avirulence gene Avr1. Resistance proteins guard the plant against pathogens that contain an appropriate avirulence protein via an indirect interaction with this avirulence protein. That triggers a defense system including the hypersensitive response, which restricts the pathogen growth. The protein is Putative late blight resistance protein homolog R1B-23 (R1B-23) of Solanum demissum (Wild potato).